A 419-amino-acid chain; its full sequence is Gamma-glutamyl phosphate reductase (419 aa).

This sequence belongs to the gamma-glutamyl phosphate reductase family.

The protein resides in the cytoplasm. It carries out the reaction L-glutamate 5-semialdehyde + phosphate + NADP(+) = L-glutamyl 5-phosphate + NADPH + H(+). The protein operates within amino-acid biosynthesis; L-proline biosynthesis; L-glutamate 5-semialdehyde from L-glutamate: step 2/2. Catalyzes the NADPH-dependent reduction of L-glutamate 5-phosphate into L-glutamate 5-semialdehyde and phosphate. The product spontaneously undergoes cyclization to form 1-pyrroline-5-carboxylate. The polypeptide is Gamma-glutamyl phosphate reductase (Syntrophomonas wolfei subsp. wolfei (strain DSM 2245B / Goettingen)).